We begin with the raw amino-acid sequence, 609 residues long: MFS siderochrome iron transporter 1 (609 aa).

Basic and acidic residues-rich tracts occupy residues Met1–Thr17 and Pro25–Pro34. Residues Met1–Val69 form a disordered region. A run of 14 helical transmembrane segments spans residues Leu81 to Ile101, Leu125 to Ala145, Ala154 to Ser174, Ala182 to Ala202, Ser220 to Val240, Trp245 to Leu265, Val300 to Ala320, Thr329 to Trp349, Ser368 to Phe390, Tyr407 to Ile427, Phe432 to Ile452, Ile469 to Ala489, Ala496 to Ile516, and Ile573 to Leu593.

Belongs to the major facilitator superfamily.

It localises to the cell membrane. Its function is as follows. Major facilitator transporter involved in extracellular siderophore uptake. Gibberella zeae produces extracellular coprogen-type siderophores as well as the intracellular siderophore ferricrocin. The role of extracellular siderophores is to supply iron to the fungus during plant infection, and the intracellular ferricrocin is required for intracellular iron distribution and storage with a crucial role in ascus and ascospore development. The protein is MFS siderochrome iron transporter 1 of Gibberella zeae (strain ATCC MYA-4620 / CBS 123657 / FGSC 9075 / NRRL 31084 / PH-1) (Wheat head blight fungus).